Reading from the N-terminus, the 735-residue chain is Peroxisomal multifunctional enzyme type 2 (735 aa).

The (3R)-hydroxyacyl-CoA dehydrogenase stretch occupies residues 1 to 305 (MASPLRFDGR…VEVLHKVDSE (305 aa)). NAD(+) is bound by residues 13–37 (LVTG…ALVI), Leu21, and Asp40. The residue at position 46 (Lys46) is an N6-acetyllysine; alternate. N6-succinyllysine; alternate is present on Lys46. Ser52 is modified (phosphoserine). 2 positions are modified to N6-succinyllysine: Lys57 and Lys68. 75–76 (SV) lines the NAD(+) pocket. Residue Lys84 is modified to N6-succinyllysine. Position 99 (Asn99) interacts with NAD(+). Ser151 contributes to the substrate binding site. Tyr164 acts as the Proton acceptor in catalysis. Residues 164–168 (YSAAK) and 196–199 (AGSR) each bind NAD(+). Thr265 is modified (phosphothreonine). Position 275 is an N6-succinyllysine (Lys275). A phosphoserine mark is found at Ser304 and Ser308. Residues 321–621 (SGFVGAVGHK…TQTPSEGGEL (301 aa)) form an enoyl-CoA hydratase 2 region. Position 355 is an N6-succinyllysine (Lys355). 405–406 (HG) provides a ligand contact to (3R)-3-hydroxydecanoyl-CoA. An N6-succinyllysine modification is found at Lys423. Residues Lys434, 509–514 (DWNPLH), Gly532, and Phe562 each bind (3R)-3-hydroxydecanoyl-CoA. Residues 483-599 (VPNRPPDAVL…HETGDVVISN (117 aa)) enclose the MaoC-like domain. Lys564 carries the post-translational modification N6-acetyllysine. 2 positions are modified to N6-succinyllysine: Lys578 and Lys662. The SCP2 domain occupies 623-735 (SALVFGEIGR…QMILKDYAKL (113 aa)). Lys668 carries the N6-acetyllysine modification. Gln705 contributes to the substrate binding site. Lys706 carries the post-translational modification N6-acetyllysine. Gln723 contributes to the substrate binding site. An N6-succinyllysine modification is found at Lys724. A Microbody targeting signal motif is present at residues 733-735 (AKL).

This sequence belongs to the short-chain dehydrogenases/reductases (SDR) family. Homodimer. In terms of tissue distribution, present in many tissues with highest concentrations in liver and kidney.

It localises to the peroxisome. The catalysed reaction is a (3R)-3-hydroxyacyl-CoA + NAD(+) = a 3-oxoacyl-CoA + NADH + H(+). It catalyses the reaction (24R,25R)-3alpha,7alpha,12alpha,24-tetrahydroxy-5beta-cholestan-26-oyl-CoA = (24E)-3alpha,7alpha,12alpha-trihydroxy-5beta-cholest-24-en-26-oyl-CoA + H2O. The enzyme catalyses a (3R)-3-hydroxyacyl-CoA = a (2E)-enoyl-CoA + H2O. It carries out the reaction (2E)-octenoyl-CoA + H2O = (3R)-hydroxyoctanoyl-CoA. The catalysed reaction is (3R)-hydroxyoctanoyl-CoA + NAD(+) = 3-oxooctanoyl-CoA + NADH + H(+). It catalyses the reaction (3R)-hydroxyhexadecanoyl-CoA + NAD(+) = 3-oxohexadecanoyl-CoA + NADH + H(+). The enzyme catalyses (2E)-hexadecenedioyl-CoA + H2O = (3R)-hydroxyhexadecanedioyl-CoA. It carries out the reaction (3R)-hydroxyhexadecanedioyl-CoA + NAD(+) = 3-oxohexadecanedioyl-CoA + NADH + H(+). The catalysed reaction is (3R)-hydroxyhexadecanoyl-CoA = (2E)-hexadecenoyl-CoA + H2O. It catalyses the reaction (3R)-3-hydroxydecanoyl-CoA = (2E)-decenoyl-CoA + H2O. The enzyme catalyses (3R)-3-hydroxydecanoyl-CoA + NAD(+) = 3-oxodecanoyl-CoA + NADH + H(+). It carries out the reaction (24R,25R)-3alpha,7alpha,12alpha,24-tetrahydroxy-5beta-cholestan-26-oyl-CoA + NAD(+) = 3alpha,7alpha,12alpha-trihydroxy-24-oxo-5beta-cholestan-26-oyl-CoA + NADH + H(+). It functions in the pathway lipid metabolism; fatty acid beta-oxidation. Its function is as follows. Bifunctional enzyme acting on the peroxisomal fatty acid beta-oxidation pathway. Catalyzes two of the four reactions in fatty acid degradation: hydration of 2-enoyl-CoA (trans-2-enoyl-CoA) to produce (3R)-3-hydroxyacyl-CoA, and dehydrogenation of (3R)-3-hydroxyacyl-CoA to produce 3-ketoacyl-CoA (3-oxoacyl-CoA), which is further metabolized by SCPx. Can use straight-chain and branched-chain fatty acids, as well as bile acid intermediates as substrates. The polypeptide is Peroxisomal multifunctional enzyme type 2 (Mus musculus (Mouse)).